Consider the following 244-residue polypeptide: Protein TIFY 10b (244 aa).

Residues 97–132 (QEPEKRQLTIFYGGKVLVFNDFPADKAKGLMQLASK) form the Tify domain. A Jas motif is present at residues 185 to 210 (PIARKASLHRFLEKRKDRLNAKTPYQ). The Nuclear localization signal motif lies at 187-194 (ARKASLHR). Residues 193–244 (HRFLEKRKDRLNAKTPYQASPSDATPVKKEPESQPWLGLGPNAVVKPIERGQ) form a disordered region. Residues 194-204 (RFLEKRKDRLN) show a composition bias toward basic and acidic residues.

Belongs to the TIFY/JAZ family. Ubiquitinated. Targeted for degradation by the SCF(COI1) E3 ubiquitin ligase-proteasome pathway during jasmonate signaling.

The protein resides in the nucleus. Its function is as follows. Repressor of jasmonate responses. The chain is Protein TIFY 10b from Oryza sativa subsp. indica (Rice).